Consider the following 340-residue polypeptide: Phenylalanine--tRNA ligase alpha subunit (340 aa).

E255 lines the Mg(2+) pocket.

The protein belongs to the class-II aminoacyl-tRNA synthetase family. Phe-tRNA synthetase alpha subunit type 1 subfamily. As to quaternary structure, tetramer of two alpha and two beta subunits. Mg(2+) is required as a cofactor.

It is found in the cytoplasm. The catalysed reaction is tRNA(Phe) + L-phenylalanine + ATP = L-phenylalanyl-tRNA(Phe) + AMP + diphosphate + H(+). The chain is Phenylalanine--tRNA ligase alpha subunit from Syntrophomonas wolfei subsp. wolfei (strain DSM 2245B / Goettingen).